A 577-amino-acid polypeptide reads, in one-letter code: Efflux pump notK' (577 aa).

N-linked (GlcNAc...) asparagine glycosylation is found at N62 and N84. 5 helical membrane-spanning segments follow: residues 104–124, 151–171, 189–209, 241–261, and 265–285; these read AAIA…PVAL, LAVT…MLGI, AGIG…LGLV, NPTM…LMMY, and GAVI…TTPV. N320 carries an N-linked (GlcNAc...) asparagine glycan. The next 5 helical transmembrane spans lie at 328-348, 373-393, 413-433, 434-454, and 476-496; these read FGLA…GTLY, VDAI…TAFV, GICF…PPWA, TGST…EINW, and IADG…GVWV. Residues 555–566 show a composition bias toward low complexity; sequence MPPNGSMSSGSP. Positions 555–577 are disordered; it reads MPPNGSMSSGSPEQVAEKAVGKY. N-linked (GlcNAc...) asparagine glycosylation occurs at N558.

It belongs to the nucleobase:cation symporter-2 (NCS2) (TC 2.A.40) family. Azg-like subfamily.

The protein resides in the cell membrane. Functionally, efflux pump; part of the gene cluster that mediates the biosynthesis of notoamide, a fungal indole alkaloid that belongs to a family of natural products containing a characteristic bicyclo[2.2.2]diazaoctane core. This chain is Efflux pump notK', found in Aspergillus versicolor.